The following is a 397-amino-acid chain: Protein Rep52 (397 aa).

In terms of domain architecture, SF3 helicase spans aspartate 84–lysine 239. Glycine 110–threonine 117 is a binding site for ATP. The segment at glycine 265–alanine 296 is disordered.

Homooligomer. Interacts with host PRKX.

The protein resides in the host nucleus. In terms of biological role, plays a critical role during packaging of viral DNA into empty capsids, where they are thought to be part of the packaging motor complex. The single stranded genomic DNA is packaged in a 3' to 5' direction and requires the association between viral DNA and Rep40. Regulates host PKA activity by interacting with host PRKX as a mechanism to interfere with helper virus propagation and to promote its own replication. The protein is Protein Rep52 (Rep52) of Mammalia (AAV-2).